Reading from the N-terminus, the 365-residue chain is 3-isopropylmalate dehydrogenase (365 aa).

78-91 (GKKWNNLPIEKRPE) serves as a coordination point for NAD(+). Substrate-binding residues include Arg-99, Arg-109, Arg-139, and Asp-228. The Mg(2+) site is built by Asp-228, Asp-252, and Asp-256. 286 to 298 (GSAPDIAGKNIAN) contacts NAD(+).

The protein belongs to the isocitrate and isopropylmalate dehydrogenases family. LeuB type 1 subfamily. In terms of assembly, homodimer. It depends on Mg(2+) as a cofactor. Requires Mn(2+) as cofactor.

It is found in the cytoplasm. The enzyme catalyses (2R,3S)-3-isopropylmalate + NAD(+) = 4-methyl-2-oxopentanoate + CO2 + NADH. Its pathway is amino-acid biosynthesis; L-leucine biosynthesis; L-leucine from 3-methyl-2-oxobutanoate: step 3/4. Its function is as follows. Catalyzes the oxidation of 3-carboxy-2-hydroxy-4-methylpentanoate (3-isopropylmalate) to 3-carboxy-4-methyl-2-oxopentanoate. The product decarboxylates to 4-methyl-2 oxopentanoate. The sequence is that of 3-isopropylmalate dehydrogenase from Buchnera aphidicola subsp. Macrosiphoniella ludovicianae.